The chain runs to 101 residues: Apolipoprotein C-II (101 aa).

The N-terminal stretch at 1-22 is a signal peptide; it reads MGTRFLLALCLVLLVLGFEVQG. Residues 23 to 28 constitute a propeptide, removed in mature form; sequence AQLPQQ. The tract at residues 66 to 74 is lipid binding; sequence AVDEKLRDL. Residues 78-101 are lipoprotein lipase cofactor; that stretch reads STAAMSTYTGIFTDQVLSVLKGEE.

Belongs to the apolipoprotein C2 family. Proapolipoprotein C-II is synthesized as a sialic acid containing glycoprotein which is subsequently desialylated prior to its proteolytic processing. Post-translationally, proapolipoprotein C-II, the major form found in plasma undergoes proteolytic cleavage of its N-terminal hexapeptide to generate apolipoprotein C-II, which occurs as the minor form in plasma.

The protein resides in the secreted. Component of chylomicrons, very low-density lipoproteins (VLDL), low-density lipoproteins (LDL), and high-density lipoproteins (HDL) in plasma. Plays an important role in lipoprotein metabolism as an activator of lipoprotein lipase. Both proapolipoprotein C-II and apolipoprotein C-II can activate lipoprotein lipase. The chain is Apolipoprotein C-II (APOC2) from Papio anubis (Olive baboon).